The primary structure comprises 432 residues: Short/branched chain specific acyl-CoA dehydrogenase, mitochondrial (432 aa).

Residues 1–33 (MAVSAFQLWRAGGLLRRNFLTHSSSWKIPPRVL) constitute a mitochondrion transit peptide. Position 70 is an N6-acetyllysine; alternate (K70). K70 is modified (N6-succinyllysine; alternate). Residues 174–183 (FCLSEAGAGS) and 207–209 (WIS) each bind FAD. Residue S183 participates in substrate binding. Position 183 is a phosphoserine (S183). Y229 is a substrate binding site. An N6-succinyllysine modification is found at K278. Substrate is bound at residue Y283. K284 carries the post-translational modification N6-acetyllysine; alternate. Residue K284 is modified to N6-succinyllysine; alternate. 291–294 (NEGR) serves as a coordination point for substrate. FAD is bound by residues R319, Q330, and 387 to 391 (EWMGG). E414 serves as the catalytic Proton acceptor. Residue 416–418 (TSN) participates in FAD binding. The residue at position 426 (K426) is an N6-acetyllysine.

This sequence belongs to the acyl-CoA dehydrogenase family. Homotetramer. Requires FAD as cofactor. Ubiquitously expressed.

The protein localises to the mitochondrion matrix. The catalysed reaction is 2-methylbutanoyl-CoA + oxidized [electron-transfer flavoprotein] + H(+) = (2E)-2-methylbut-2-enoyl-CoA + reduced [electron-transfer flavoprotein]. It carries out the reaction (2S)-2-methylbutanoyl-CoA + oxidized [electron-transfer flavoprotein] + H(+) = (2E)-2-methylbut-2-enoyl-CoA + reduced [electron-transfer flavoprotein]. It catalyses the reaction (2R)-2-methylbutanoyl-CoA + oxidized [electron-transfer flavoprotein] + H(+) = ethylacryloyl-CoA + reduced [electron-transfer flavoprotein]. The enzyme catalyses butanoyl-CoA + oxidized [electron-transfer flavoprotein] + H(+) = (2E)-butenoyl-CoA + reduced [electron-transfer flavoprotein]. The catalysed reaction is 2-methylpropanoyl-CoA + oxidized [electron-transfer flavoprotein] + H(+) = 2-methylpropenoyl-CoA + reduced [electron-transfer flavoprotein]. It carries out the reaction hexanoyl-CoA + oxidized [electron-transfer flavoprotein] + H(+) = (2E)-hexenoyl-CoA + reduced [electron-transfer flavoprotein]. It catalyses the reaction valproyl-CoA + oxidized [electron-transfer flavoprotein] + H(+) = (2E)-2-propylpent-2-enoyl-CoA + reduced [electron-transfer flavoprotein]. It participates in lipid metabolism; mitochondrial fatty acid beta-oxidation. The protein operates within amino-acid degradation; L-isoleucine degradation. Its activity is regulated as follows. Inhibited by N-ethylmaleimide, hydroxymercuribenzoate, methyl mercury iodide and heavy metals such as Hg2+, Cu2+, and Ag2+. Its function is as follows. Short and branched chain specific acyl-CoA dehydrogenase that catalyzes the removal of one hydrogen from C-2 and C-3 of the fatty acyl-CoA thioester, resulting in the formation of trans-2-enoyl-CoA. Among the different mitochondrial acyl-CoA dehydrogenases, acts specifically on short and branched chain acyl-CoA derivatives such as (S)-2-methylbutyryl-CoA as well as short straight chain acyl-CoAs such as butyryl-CoA. Plays an important role in the metabolism of L-isoleucine by catalyzing the dehydrogenation of 2-methylbutyryl-CoA, one of the steps of the L-isoleucine catabolic pathway. Can also act on valproyl-CoA, a metabolite of the valproic acid drug. The chain is Short/branched chain specific acyl-CoA dehydrogenase, mitochondrial from Rattus norvegicus (Rat).